We begin with the raw amino-acid sequence, 321 residues long: Phosphopantothenate--cysteine ligase 1 (321 aa).

Belongs to the PPC synthetase family. As to quaternary structure, homodimer.

It catalyses the reaction (R)-4'-phosphopantothenate + L-cysteine + CTP = N-[(R)-4-phosphopantothenoyl]-L-cysteine + CMP + diphosphate + H(+). It functions in the pathway cofactor biosynthesis; coenzyme A biosynthesis; CoA from (R)-pantothenate: step 2/5. Catalyzes the first step in the biosynthesis of coenzyme A from vitamin B5, where cysteine is conjugated to 4'-phosphopantothenate to form 4-phosphopantothenoylcysteine. In Oryza sativa subsp. japonica (Rice), this protein is Phosphopantothenate--cysteine ligase 1.